The primary structure comprises 1409 residues: MAP kinase-activating death domain protein (1409 aa).

Residues 26 to 230 (RGASQSSPDA…VPVPGKTKVQ (205 aa)) form the uDENN domain. The cDENN domain maps to 251 to 390 (RFTLIDFPLH…DATHLKERLK (140 aa)). In terms of domain architecture, dDENN spans 392 to 496 (AINKMTTMTV…ECCLCPKNET (105 aa)). Disordered regions lie at residues 654 to 701 (SFDH…MKGL), 761 to 784 (QHIVRSKTQPNPTSQQTANQQSKN), 902 to 1008 (SSSA…KVKT), and 1015 to 1034 (PQNLVPNNQPAQPSSPSFLA). Polar residues-rich tracts occupy residues 680-691 (SDASDTPTSRGS) and 761-772 (QHIVRSKTQPNP). 2 stretches are compositionally biased toward low complexity: residues 773–784 (TSQQTANQQSKN) and 902–913 (SSSAPSTMTTPS). The segment covering 915–925 (HSNDILKESRP) has biased composition (basic and acidic residues). A compositionally biased stretch (polar residues) spans 941-961 (LGQNVTPTSTNNHEIAQSTRS). A compositionally biased stretch (pro residues) spans 963–1003 (ALPPPVPPREAPPIPKRNPPPLGAPPKVPEGARAPPPLPPR). Residues 1020 to 1031 (PNNQPAQPSSPS) show a composition bias toward low complexity. The Death domain maps to 1109–1184 (GMDQEPSEMI…GLVCSKEINK (76 aa)).

It belongs to the MADD family. In terms of assembly, interacts with cab-1. As to expression, expressed in nearly all neurons.

The protein localises to the cell membrane. Its subcellular location is the cytoplasm. Its function is as follows. Guanyl-nucleotide exchange factor that regulates small GTPases. Converts GDP-bound inactive form of rab-3 and cab-1 to the GTP-bound active forms. Regulator of presynaptic activity that interacts with rab-3 to regulate synaptic vesicle release. Is also a regulator of the cab-1 synaptic transmission pathway. Probably by converting rab-3 to its GTP-bound active form, plays a role in the recruitment of endophilin unc-57 to synaptic vesicles. Probably by activating rab-3 and thus regulating the trafficking of dense-core vesicles, plays a role in AVG neuron-mediated formation of the right axon tract of the ventral nerve cord. Regulates anterior body muscle contractions (aBOC) and the expulsion steps during the defecation motor program (DMP). Probably by regulating DMP, required for fatty acid uptake by intestinal cells. The chain is MAP kinase-activating death domain protein (aex-3) from Caenorhabditis elegans.